The primary structure comprises 513 residues: Probable E3 ubiquitin-protein ligase XBOS34 (513 aa).

ANK repeat units lie at residues Glu-39–Ala-69, Tyr-75–Ile-104, and Asp-108–Gly-137. 2 stretches are compositionally biased toward polar residues: residues Ile-309 to Asn-327 and Ser-335 to Asn-355. Disordered regions lie at residues Ile-309–Thr-378 and Ser-423–Gly-455. A compositionally biased stretch (low complexity) spans Gly-361–Thr-378. Over residues Ala-436–Glu-446 the composition is skewed to basic and acidic residues. The segment at Cys-462–Arg-501 adopts an RING-type zinc-finger fold.

It carries out the reaction S-ubiquitinyl-[E2 ubiquitin-conjugating enzyme]-L-cysteine + [acceptor protein]-L-lysine = [E2 ubiquitin-conjugating enzyme]-L-cysteine + N(6)-ubiquitinyl-[acceptor protein]-L-lysine.. It functions in the pathway protein modification; protein ubiquitination. This chain is Probable E3 ubiquitin-protein ligase XBOS34 (XBOS34), found in Oryza sativa subsp. japonica (Rice).